The following is a 457-amino-acid chain: Putative F-box protein At3g58860 (457 aa).

An F-box domain is found at 6 to 54 (MDLFSKLPDEVISHILSSLPTKEAASTSVLAKKWRYLFAFVPSLDFNDS).

This Arabidopsis thaliana (Mouse-ear cress) protein is Putative F-box protein At3g58860.